The chain runs to 161 residues: Allophycocyanin beta chain (161 aa).

Residue Asn71 is modified to N4-methylasparagine. Cys81 serves as a coordination point for (2R,3E)-phycocyanobilin.

Belongs to the phycobiliprotein family. As to quaternary structure, heterodimer of an alpha and a beta chain. Contains one covalently linked phycocyanobilin chromophore.

The protein resides in the cellular thylakoid membrane. Functionally, light-harvesting photosynthetic bile pigment-protein from the phycobiliprotein complex. Allophycocyanin has a maximum absorption at approximately 650 nanometers. The protein is Allophycocyanin beta chain (apcB) of Anabaena cylindrica.